A 449-amino-acid polypeptide reads, in one-letter code: Signal recognition particle protein (449 aa).

GTP is bound by residues 109 to 116 (GLQGSGKT), 191 to 195 (DTAGR), and 249 to 252 (SRID).

The protein belongs to the GTP-binding SRP family. SRP54 subfamily. Part of the signal recognition particle protein translocation system, which is composed of SRP and FtsY. SRP is a ribonucleoprotein composed of Ffh and a 4.5S RNA molecule.

It localises to the cytoplasm. It carries out the reaction GTP + H2O = GDP + phosphate + H(+). Its function is as follows. Involved in targeting and insertion of nascent membrane proteins into the cytoplasmic membrane. Binds to the hydrophobic signal sequence of the ribosome-nascent chain (RNC) as it emerges from the ribosomes. The SRP-RNC complex is then targeted to the cytoplasmic membrane where it interacts with the SRP receptor FtsY. Interaction with FtsY leads to the transfer of the RNC complex to the Sec translocase for insertion into the membrane, the hydrolysis of GTP by both Ffh and FtsY, and the dissociation of the SRP-FtsY complex into the individual components. The protein is Signal recognition particle protein of Rickettsia felis (strain ATCC VR-1525 / URRWXCal2) (Rickettsia azadi).